Here is a 347-residue protein sequence, read N- to C-terminus: Aromatic amino acid aminotransferase (347 aa).

K214 is subject to N6-(pyridoxal phosphate)lysine.

The protein belongs to the class-II pyridoxal-phosphate-dependent aminotransferase family. As to quaternary structure, homodimer. It depends on pyridoxal 5'-phosphate as a cofactor.

It carries out the reaction an aromatic L-alpha-amino acid + 2-oxoglutarate = an aromatic oxo-acid + L-glutamate. Its function is as follows. Aminotransferase that catalyzes the conversion of aromatic amino acids and 2-oxoglutarate into corresponding aromatic oxo acids and L-glutamate. The polypeptide is Aromatic amino acid aminotransferase (Mycobacteroides abscessus (strain ATCC 19977 / DSM 44196 / CCUG 20993 / CIP 104536 / JCM 13569 / NCTC 13031 / TMC 1543 / L948) (Mycobacterium abscessus)).